The sequence spans 201 residues: MARYTGPATRKSRRLGVDLVGGDQSFEKRPYPPGQHGRARIKESEYRQQLQEKQKARFSYGVMEKQFRRYYEEANRQPGKTGDNLLRILESRLDNVVYRAGLARTRRMARQLVSHGHFLVNGVKVDIPSYRVSQYDIIDVKEKSLNTLPFQIARETAGERPIPSWLQVVGERQRILVHQLPERAQIDVPLTEQLIVELYSK.

Residues M1–K42 are disordered. Positions S91–A157 constitute an S4 RNA-binding domain.

The protein belongs to the universal ribosomal protein uS4 family. As to quaternary structure, part of the 30S ribosomal subunit. Contacts protein S5. The interaction surface between S4 and S5 is involved in control of translational fidelity.

Functionally, one of the primary rRNA binding proteins, it binds directly to 16S rRNA where it nucleates assembly of the body of the 30S subunit. In terms of biological role, with S5 and S12 plays an important role in translational accuracy. The sequence is that of Small ribosomal subunit protein uS4 from Mycolicibacterium smegmatis (strain ATCC 700084 / mc(2)155) (Mycobacterium smegmatis).